A 478-amino-acid polypeptide reads, in one-letter code: TFIIA-alpha and beta-like factor (478 aa).

A disordered region spans residues 309–427 (VKQPRNIEEP…SGDDVSEQDV (119 aa)). Polar residues predominate over residues 390–401 (SISNEDSATNSS). The span at 411–427 (VEEDPLNSGDDVSEQDV) shows a compositional bias: acidic residues.

It belongs to the TFIIA subunit 1 family. In terms of tissue distribution, testis specific. Detected in adult testis mostly in round and elongating spermatids (at protein level). Detected in testis.

The protein localises to the nucleus. In terms of biological role, may function as a testis specific transcription factor. Binds DNA in conjunction with GTF2A2 and TBP (the TATA-binding protein) and together with GTF2A2, allows mRNA transcription. The sequence is that of TFIIA-alpha and beta-like factor (GTF2A1L) from Homo sapiens (Human).